Here is a 239-residue protein sequence, read N- to C-terminus: Small ribosomal subunit protein uS3c (239 aa).

The 97-residue stretch at 43–139 (IKNYIQKNRK…RLNISIEKVK (97 aa)) folds into the KH type-2 domain. The disordered stretch occupies residues 50-80 (NRKKSSNRKLESDSSSEVITHNRKNDSGSSS).

This sequence belongs to the universal ribosomal protein uS3 family. In terms of assembly, part of the 30S ribosomal subunit.

The protein localises to the plastid. The protein resides in the chloroplast. The chain is Small ribosomal subunit protein uS3c (rps3) from Lolium perenne (Perennial ryegrass).